Here is a 541-residue protein sequence, read N- to C-terminus: Berberine bridge enzyme-like 1 (541 aa).

Positions 1-20 are cleaved as a signal peptide; sequence MKLSCLVFLIVSSLVSSSLA. 7 N-linked (GlcNAc...) asparagine glycosylation sites follow: N25, N38, N73, N136, N302, N339, and N357. A disulfide bridge connects residues C35 and C98. The region spanning 76–255 is the FAD-binding PCMH-type domain; sequence TSPKPLLVIA…LSFKIKLVPV (180 aa). Residues 113–180 constitute a cross-link (6-(S-cysteinyl)-8alpha-(pros-histidyl)-FAD (His-Cys)); that stretch reads HDYDGVSYIS…GTHGFPAGVC (68 aa).

The protein belongs to the oxygen-dependent FAD-linked oxidoreductase family. Requires FAD as cofactor. The FAD cofactor is bound via a bicovalent 6-S-cysteinyl, 8alpha-N1-histidyl FAD linkage. Accumulates in cell walls of etiolated hypocotyls.

It is found in the secreted. The protein resides in the cell wall. The polypeptide is Berberine bridge enzyme-like 1 (Arabidopsis thaliana (Mouse-ear cress)).